A 128-amino-acid chain; its full sequence is Gene 64 protein (128 aa).

The polypeptide is Gene 64 protein (64) (Mycobacterium phage L5 (Mycobacteriophage L5)).